Here is a 262-residue protein sequence, read N- to C-terminus: Protein crossbronx-like (262 aa).

A UBC core domain is found at 15 to 179 (RQGYQVLAEY…VQELALFTKK (165 aa)).

This sequence belongs to the ubiquitin-conjugating enzyme family. FTS subfamily.

The sequence is that of Protein crossbronx-like from Drosophila pseudoobscura pseudoobscura (Fruit fly).